The chain runs to 244 residues: 15,16-dihydrobiliverdin:ferredoxin oxidoreductase (244 aa).

It belongs to the HY2 family.

It catalyses the reaction 15,16-dihydrobiliverdin + oxidized 2[4Fe-4S]-[ferredoxin] = biliverdin IXalpha + reduced 2[4Fe-4S]-[ferredoxin] + 2 H(+). In terms of biological role, catalyzes the two-electron reduction of biliverdin IX-alpha at the C15 methine bridge. The sequence is that of 15,16-dihydrobiliverdin:ferredoxin oxidoreductase (pebA) from Gloeobacter violaceus (strain ATCC 29082 / PCC 7421).